Reading from the N-terminus, the 120-residue chain is NAD(P)H-quinone oxidoreductase subunit 3, chloroplastic (120 aa).

A run of 3 helical transmembrane segments spans residues 9 to 29 (IFWA…LISG), 64 to 84 (MFAL…PWAM), and 88 to 108 (VLGV…IVGS).

Belongs to the complex I subunit 3 family. NDH is composed of at least 16 different subunits, 5 of which are encoded in the nucleus.

It localises to the plastid. The protein resides in the chloroplast thylakoid membrane. It carries out the reaction a plastoquinone + NADH + (n+1) H(+)(in) = a plastoquinol + NAD(+) + n H(+)(out). The catalysed reaction is a plastoquinone + NADPH + (n+1) H(+)(in) = a plastoquinol + NADP(+) + n H(+)(out). Functionally, NDH shuttles electrons from NAD(P)H:plastoquinone, via FMN and iron-sulfur (Fe-S) centers, to quinones in the photosynthetic chain and possibly in a chloroplast respiratory chain. The immediate electron acceptor for the enzyme in this species is believed to be plastoquinone. Couples the redox reaction to proton translocation, and thus conserves the redox energy in a proton gradient. This is NAD(P)H-quinone oxidoreductase subunit 3, chloroplastic from Calycanthus floridus var. glaucus (Eastern sweetshrub).